The following is a 261-amino-acid chain: Proteasome assembly chaperone 2 (261 aa).

Belongs to the PSMG2 family. Forms a heterodimer with psmg1. Degraded by the proteasome upon completion of 20S proteasome maturation.

The protein resides in the nucleus. In terms of biological role, chaperone protein which promotes assembly of the 20S proteasome as part of a heterodimer with psmg1. This is Proteasome assembly chaperone 2 from Xenopus tropicalis (Western clawed frog).